The primary structure comprises 489 residues: CUGBP Elav-like family member 1-B (489 aa).

RRM domains are found at residues 16 to 99 (IKMF…PADS), 108 to 188 (RKLF…FADT), and 404 to 482 (ANLF…LKRS).

It belongs to the CELF/BRUNOL family. As to quaternary structure, oligomer. Oligomerization is required for RNA-binding and EDEN-dependent deadenylation. Post-translationally, phosphorylated during oocyte maturation and dephosphorylated following egg activation. Dephosphorylation is calcium dependent and correlates with the increase in the activity of EDEN-dependent deadenylation.

Its subcellular location is the nucleus. The protein resides in the cytoplasm. In terms of biological role, RNA-binding protein implicated in the regulation of several post-transcriptional events. May be involved in pre-mRNA alternative splicing, mRNA translation activation and stability. Mediates the rapid and sequence-specific cytoplasmic deadenylation of EDEN-containing maternal mRNAs following fertilization. Binds to AU-rich sequences (AREs) of jun mRNA. Binds to the embryonic deadenylation element (EDEN) motif localized in the 3'-UTR of maternal mRNAs. Binds to RNA containing several repeats of the consensus sequence 5'-UGU-3'. EDEN-dependent deadenylation is enhanced by the presence of an additional cis element composed of three AUU repeats. In Xenopus laevis (African clawed frog), this protein is CUGBP Elav-like family member 1-B (cugbp1-b).